The primary structure comprises 142 residues: ATP synthase epsilon chain (142 aa).

The protein belongs to the ATPase epsilon chain family. In terms of assembly, F-type ATPases have 2 components, CF(1) - the catalytic core - and CF(0) - the membrane proton channel. CF(1) has five subunits: alpha(3), beta(3), gamma(1), delta(1), epsilon(1). CF(0) has three main subunits: a, b and c.

It is found in the cell inner membrane. Functionally, produces ATP from ADP in the presence of a proton gradient across the membrane. The polypeptide is ATP synthase epsilon chain (Shewanella baltica (strain OS185)).